The primary structure comprises 468 residues: Peripherin (468 aa).

The segment covering 1 to 16 has biased composition (low complexity); it reads MSHHSSGLRSSISSTS. A disordered region spans residues 1–22; it reads MSHHSSGLRSSISSTSYRRTFG. Residues 1 to 96 are head; the sequence is MSHHSSGLRS…FLATRSNEKQ (96 aa). 3'-nitrotyrosine is present on Tyr17. Phosphoserine occurs at positions 28, 50, and 59. Residues 94-404 form the IF rod domain; the sequence is EKQELQELND…KLLEGEESRI (311 aa). The interval 97 to 129 is coil 1A; it reads ELQELNDRFANFIEKVRFLEQQNAALRGELSQA. Residues 130 to 140 are linker 1; sequence RGQEPARADQL. A coil 1B region spans residues 141–236; it reads CQQELRELRR…KLHEEELRDL (96 aa). The interval 237–259 is linker 2; it reads QVSVESQQVQQVEVEATVKPELT. The coil 2 stretch occupies residues 260 to 402; that stretch reads AALRDIRAQY…YRKLLEGEES (143 aa). The residue at position 376 (Tyr376) is a 3'-nitrotyrosine. A tail region spans residues 403 to 468; sequence RISVPVHSFA…ELDKSSIHSY (66 aa). Residues 445-468 form a disordered region; the sequence is GEKVVTESQKEQHSELDKSSIHSY. At Tyr468 the chain carries Phosphotyrosine.

It belongs to the intermediate filament family. Forms homodimers (in vitro). Homopolymerizes into a filamentous network (in vitro). Forms heterodimers with NEFL, NEFM or NEFH (in vitro). Interacts with DST (via C-terminus). Interacts with RAB7A; the interaction is direct. Interacts with PRKCE (via phorbol-ester/DAG-type 2 domain). In terms of processing, phosphorylated; phosphorylation increases after nerve injury in regenerating neurons. In terms of tissue distribution, expressed in hypoglossal motor neurons (at protein level). Expressed in the small and large sensory neurons of the dorsal root ganglion (at protein level). Expressed in cutaneous and muscular sensory neurons.

The protein localises to the cytoplasm. It is found in the cytoskeleton. The protein resides in the cell projection. It localises to the axon. Its subcellular location is the perikaryon. Functionally, class-III neuronal intermediate filament protein. My form an independent structural network without the involvement of other neurofilaments or may cooperate with the neuronal intermediate filament proteins NEFL, NEFH, NEFM and INA to form a filamentous network. Assembly of the neuronal intermediate filaments may be regulated by RAB7A. Plays a role in the development of unmyelinated sensory neurons. May be involved in axon elongation and axon regeneration after injury. Inhibits neurite extension in type II spiral ganglion neurons in the cochlea. This Rattus norvegicus (Rat) protein is Peripherin (Prph).